Reading from the N-terminus, the 190-residue chain is Dynactin subunit 6 (190 aa).

T186 carries the post-translational modification Phosphothreonine; by CDK1.

It belongs to the dynactin subunits 5/6 family. Dynactin subunit 6 subfamily. Subunit of dynactin, a multiprotein complex part of a tripartite complex with dynein and a adapter, such as BICDL1, BICD2 or HOOK3. The dynactin complex is built around ACTR1A/ACTB filament and consists of an actin-related filament composed of a shoulder domain, a pointed end and a barbed end. Its length is defined by its flexible shoulder domain. The soulder is composed of 2 DCTN1 subunits, 4 DCTN2 and 2 DCTN3. The 4 DCNT2 (via N-terminus) bind the ACTR1A filament and act as molecular rulers to determine the length. The pointed end is important for binding dynein-dynactin cargo adapters. Consists of 4 subunits: ACTR10, DCNT4, DCTN5 and DCTN6. Within the complex DCTN6 forms a heterodimer with DCTN5. The barbed end is composed of a CAPZA1:CAPZB heterodimers, which binds ACTR1A/ACTB filament and dynactin and stabilizes dynactin. Interacts with PLK1. Interacts with N4BP2L1. In terms of processing, phosphorylation at Thr-186 by CDK1 during mitotic prometaphase creates a binding site for PLK1 that facilitates its recruitment to kinetochores.

The protein resides in the cytoplasm. It is found in the cytoskeleton. It localises to the chromosome. The protein localises to the centromere. Its subcellular location is the kinetochore. In terms of biological role, part of the dynactin complex that activates the molecular motor dynein for ultra-processive transport along microtubules. The sequence is that of Dynactin subunit 6 (DCTN6) from Bos taurus (Bovine).